The sequence spans 104 residues: Increased recombination centers protein 13 (104 aa).

A helical transmembrane segment spans residues L63–L83.

The protein resides in the membrane. Functionally, may be involved in a pathway contributing to genomic integrity. The sequence is that of Increased recombination centers protein 13 (IRC13) from Saccharomyces cerevisiae (strain ATCC 204508 / S288c) (Baker's yeast).